A 401-amino-acid polypeptide reads, in one-letter code: Argininosuccinate synthase (401 aa).

8 to 16 (AYSGGLDTS) is a binding site for ATP. Tyrosine 87 contributes to the L-citrulline binding site. Glycine 117 is a binding site for ATP. L-aspartate-binding residues include threonine 119, asparagine 123, and aspartate 124. Asparagine 123 serves as a coordination point for L-citrulline. Residues arginine 127, serine 175, glutamate 259, and tyrosine 271 each contribute to the L-citrulline site.

Belongs to the argininosuccinate synthase family. Type 1 subfamily. In terms of assembly, homotetramer.

Its subcellular location is the cytoplasm. The enzyme catalyses L-citrulline + L-aspartate + ATP = 2-(N(omega)-L-arginino)succinate + AMP + diphosphate + H(+). It participates in amino-acid biosynthesis; L-arginine biosynthesis; L-arginine from L-ornithine and carbamoyl phosphate: step 2/3. In Pseudarthrobacter chlorophenolicus (strain ATCC 700700 / DSM 12829 / CIP 107037 / JCM 12360 / KCTC 9906 / NCIMB 13794 / A6) (Arthrobacter chlorophenolicus), this protein is Argininosuccinate synthase.